A 563-amino-acid chain; its full sequence is Protein disulfide isomerase-like 1-4 (563 aa).

The first 22 residues, 1-22 (MRSRSLLLVALATLLLHASASA), serve as a signal peptide directing secretion. The disordered stretch occupies residues 40–64 (NDPDGWLQEGSPDDDDDDDLFHHGQ). In terms of domain architecture, Thioredoxin 1 spans 46-180 (LQEGSPDDDD…IVSWVNKKLA (135 aa)). N-linked (GlcNAc...) asparagine glycosylation occurs at asparagine 82. Catalysis depends on nucleophile residues cysteine 102 and cysteine 105. Cysteines 102 and 105 form a disulfide. N-linked (GlcNAc...) asparagine glycans are attached at residues asparagine 185 and asparagine 315. In terms of domain architecture, Thioredoxin 2 spans 394–523 (FLEEKLTPFY…MYKFIKKHAS (130 aa)). Residues cysteine 444 and cysteine 447 each act as nucleophile in the active site. A disulfide bridge links cysteine 444 with cysteine 447. Residues 529–542 (KRPDSSATKTEKDQ) are compositionally biased toward basic and acidic residues. The segment at 529–563 (KRPDSSATKTEKDQSTASTNLRGERSSGTNFKDEL) is disordered. Over residues 543–563 (STASTNLRGERSSGTNFKDEL) the composition is skewed to polar residues. A Prevents secretion from ER motif is present at residues 560-563 (KDEL).

The protein belongs to the protein disulfide isomerase family.

It localises to the endoplasmic reticulum lumen. It catalyses the reaction Catalyzes the rearrangement of -S-S- bonds in proteins.. Functionally, acts as a protein-folding catalyst that interacts with nascent polypeptides to catalyze the formation, isomerization, and reduction or oxidation of disulfide bonds. May play a role in storage protein biogenesis. The polypeptide is Protein disulfide isomerase-like 1-4 (PDIL1-4) (Oryza sativa subsp. japonica (Rice)).